Consider the following 57-residue polypeptide: Large ribosomal subunit protein bL32c (57 aa).

The segment at 1–21 (MAVPKKRTSKSKKNLRKNTWK) is disordered.

It belongs to the bacterial ribosomal protein bL32 family.

It localises to the plastid. The protein localises to the chloroplast. The protein is Large ribosomal subunit protein bL32c of Stigeoclonium helveticum (Green alga).